The primary structure comprises 381 residues: Beta-1,4-galactosyltransferase 5 (381 aa).

Topologically, residues 1 to 11 are cytoplasmic; sequence MPTHLRFRRRS. Residues 12–32 traverse the membrane as a helical; Signal-anchor for type II membrane protein segment; the sequence is FLGLLFLFSLSTSALYFIYSA. At 33-381 the chain is on the lumenal side; the sequence is PGIVNEYLFM…SRDLAPVADY (349 aa). Residues asparagine 73, asparagine 82, and asparagine 120 are each glycosylated (N-linked (GlcNAc...) asparagine). Cysteines 106 and 151 form a disulfide. Residues 162-166, 201-203, 228-229, tyrosine 257, and tryptophan 289 each bind UDP-alpha-D-galactose; these read PFRNR, FNR, and VD. An intrachain disulfide couples cysteine 222 to cysteine 241. Aspartate 229 contacts Mn(2+). 291 to 294 contributes to the N-acetyl-D-glucosamine binding site; that stretch reads GEDD. Histidine 322 provides a ligand contact to Mn(2+). 322–323 is a UDP-alpha-D-galactose binding site; that stretch reads HH. Position 333 (arginine 333) interacts with N-acetyl-D-glucosamine. An N-linked (GlcNAc...) asparagine glycan is attached at asparagine 366.

Belongs to the glycosyltransferase 7 family. The cofactor is Mn(2+).

The protein resides in the golgi apparatus. It localises to the golgi stack membrane. The enzyme catalyses a beta-D-glucosyl-(1&lt;-&gt;1')-N-acylsphing-4-enine + UDP-alpha-D-galactose = a beta-D-Gal-(1-&gt;4)-beta-D-Glc-(1&lt;-&gt;1)-Cer(d18:1(4E)) + UDP + H(+). It participates in protein modification; protein glycosylation. It functions in the pathway sphingolipid metabolism. Catalyzes the synthesis of lactosylceramide (LacCer) via the transfer of galactose from UDP-galactose to glucosylceramide (GlcCer). Required for proper patterning of the dorsoventral axis during embryogenesis through the regulation of BMP signaling. Plays a role in proteoglycan glycosylation that is required for BMP-dependent specification of the dorsoventral axis. This chain is Beta-1,4-galactosyltransferase 5 (b4galt5), found in Danio rerio (Zebrafish).